Consider the following 654-residue polypeptide: Macrolide export ATP-binding/permease protein MacB (654 aa).

In terms of domain architecture, ABC transporter spans 6–244; that stretch reads LKVEDLTRRF…EQAAKTPSAS (239 aa). 42–49 contacts ATP; that stretch reads GASGSGKS. 4 helical membrane-spanning segments follow: residues 280 to 300, 529 to 549, 584 to 604, and 619 to 639; these read FLTM…VALG, LLIS…VMNI, LVCL…GFAF, and SIIW…FLPA.

The protein belongs to the ABC transporter superfamily. Macrolide exporter (TC 3.A.1.122) family. Homodimer. Part of the tripartite efflux system MacAB-TolC, which is composed of an inner membrane transporter, MacB, a periplasmic membrane fusion protein, MacA, and an outer membrane component, TolC. The complex forms a large protein conduit and can translocate molecules across both the inner and outer membranes. Interacts with MacA.

It localises to the cell inner membrane. Functionally, part of the tripartite efflux system MacAB-TolC. MacB is a non-canonical ABC transporter that contains transmembrane domains (TMD), which form a pore in the inner membrane, and an ATP-binding domain (NBD), which is responsible for energy generation. Confers resistance against macrolides. This chain is Macrolide export ATP-binding/permease protein MacB, found in Vibrio parahaemolyticus serotype O3:K6 (strain RIMD 2210633).